Reading from the N-terminus, the 366-residue chain is Ribosome-binding ATPase YchF (366 aa).

The region spanning 3–259 (LTAGIVGLPN…LEGEEKQMFL (257 aa)) is the OBG-type G domain. 12 to 17 (NVGKST) is a binding site for ATP. Residues Ser-16 and Thr-36 each coordinate Mg(2+). In terms of domain architecture, TGS spans 281-364 (GLATYFTAGE…QDGDVIHFRF (84 aa)).

It belongs to the TRAFAC class OBG-HflX-like GTPase superfamily. OBG GTPase family. YchF/OLA1 subfamily. Mg(2+) is required as a cofactor.

In terms of biological role, ATPase that binds to both the 70S ribosome and the 50S ribosomal subunit in a nucleotide-independent manner. The sequence is that of Ribosome-binding ATPase YchF from Bacillus subtilis (strain 168).